A 383-amino-acid polypeptide reads, in one-letter code: Probable disease resistance protein At4g19060 (383 aa).

A disordered region spans residues 36–84 (YEKWSSGKQRGSSSKHGNQSTHGDSSPTRNSSGSSKKGRPKANRVETSS). The span at 41–70 (SGKQRGSSSKHGNQSTHGDSSPTRNSSGSS) shows a compositional bias: polar residues. NB-ARC domains lie at 75 to 184 (PKAN…MFKH) and 207 to 281 (VKEK…LAKA). 121–128 (GKYGVGKT) is an ATP binding site.

Its function is as follows. Possible disease resistance protein. In Arabidopsis thaliana (Mouse-ear cress), this protein is Probable disease resistance protein At4g19060.